The primary structure comprises 4080 residues: Hybrid PKS-NRPS synthetase poxE (4080 aa).

The region spanning R8–A442 is the Ketosynthase family 3 (KS3) domain. Residues C181, H320, and H362 each act as for beta-ketoacyl synthase activity in the active site. Residues V554 to M878 form a malonyl-CoA:ACP transacylase (MAT) domain region. The N-terminal hotdog fold stretch occupies residues H944–V1078. The PKS/mFAS DH domain maps to H944–D1246. Residues P945 to T1243 form a dehydratase (DH) domain region. H976 serves as the catalytic Proton acceptor; for dehydratase activity. The segment at M1093 to D1246 is C-terminal hotdog fold. Catalysis depends on D1152, which acts as the Proton donor; for dehydratase activity. The methyltransferase (MT) domain stretch occupies residues H1400 to D1585. Residues T2118–I2292 are ketoreductase (KR)domain. Residues T2399–L2478 are peptidyl carrier protein. In terms of domain architecture, Carrier 1 spans E2405 to L2481. At S2441 the chain carries O-(pantetheine 4'-phosphoryl)serine. Residues S2488–E2569 are disordered. Residues V2511–I2525 are compositionally biased toward basic and acidic residues. The segment covering S2528–S2545 has biased composition (low complexity). The span at D2551 to I2565 shows a compositional bias: polar residues. The condensation stretch occupies residues K2607–S3036. The adenylation stretch occupies residues D3069–I3478. Positions A3593 to E3673 constitute a Carrier 2 domain. A thiolation region spans residues A3598–K3670. An O-(pantetheine 4'-phosphoryl)serine modification is found at S3633. Residues L3740–R3959 are reductase (RED) domain.

The protein in the C-terminal section; belongs to the NRP synthetase family.

It functions in the pathway secondary metabolite biosynthesis. Hybrid PKS-NRPS synthetase; part of the gene cluster that mediates the biosynthesis of oxaleimides, cytotoxic compounds containing an unusual disubstituted succinimide moiety. The first step of the pathway is provided by the HR-PKS poxF that serves in a new mode of collaborative biosynthesis with the PKS-NRPS poxE, by providing the olefin containing amino acid substrate via the synthesis of an ACP-bound dec-4-enoate. The cytochrome P450 monooxygenase poxM-catalyzed oxidation at the alpha-position creates the enzyme-bound 2-hydroxydec-4-enoyl-ACP thioester, which may be prone to spontaneous hydrolysis to yield 2-hydroxydec-4-enoic acid due to increased electrophilicity of the carbonyl. 2-hydroxydec-4-enoic acid can then be further oxidized by poxM to yield the alpha-ketoacid 2-oxodec-4-enoicacid, which is reductively aminated by the aminotransferase poxL to yield (S,E)-2-aminodec-4-enoic acid. The Hybrid PKS-NRPS synthetase poxE then performs condensation between the octaketide product of its PKS modules and the amino group of (S,E)-2-aminodec-4-enoic acid which is activated and incorporated by the adenylation domain. The resulting aminoacyl product can be cyclized by the Diels-Alderase PoxQ and reductively released by the reductive (R) domain of poxE to yield an aldehyde intermediate. The released aldehyde is then substrate for a Knoevenagel condensation by the hydrolyase poxO followed by an oxidation at the 5-position of the pyrrolidone ring. The presence of the olefin from the amino acid building block allows for migration of the substituted allyl group to occur. This allylic transposition reaction takes place in a conjugate addition, semipinacol-like fashion to yield a succinimide intermediate. Iterative two-electron oxidations of the C7 methyl of the succinimide intermediate to the carboxylic acid can be catalyzed by one of two remaining cytochrome P450 monooxygenasess poxC or poxD to yield oxaleimide A. Subsequent oxidation yields the maleimide scaffold oxaleimide I. Both oxaleimide A and oxaleimide I can undergo oxidative modifications in the decalin ring to yield the series of products oxaleimides B to H. This Penicillium oxalicum protein is Hybrid PKS-NRPS synthetase poxE.